Reading from the N-terminus, the 115-residue chain is T cell receptor beta variable 7-2 (115 aa).

The first 21 residues, 1–21 (MGTRLLFWVAFCLLGADHTGA), serve as a signal peptide directing secretion. In terms of domain architecture, Ig-like spans 22–115 (GVSQSPSNKV…SAVYLCASSL (94 aa)). Cysteines 42 and 111 form a disulfide.

As to quaternary structure, alpha-beta TR is a heterodimer composed of an alpha and beta chain; disulfide-linked. The alpha-beta TR is associated with the transmembrane signaling CD3 coreceptor proteins to form the TR-CD3 (TcR or TCR). The assembly of alpha-beta TR heterodimers with CD3 occurs in the endoplasmic reticulum where a single alpha-beta TR heterodimer associates with one CD3D-CD3E heterodimer, one CD3G-CD3E heterodimer and one CD247 homodimer forming a stable octameric structure. CD3D-CD3E and CD3G-CD3E heterodimers preferentially associate with TR alpha and TR beta chains, respectively. The association of the CD247 homodimer is the last step of TcR assembly in the endoplasmic reticulum and is required for transport to the cell surface.

The protein resides in the cell membrane. Functionally, v region of the variable domain of T cell receptor (TR) beta chain that participates in the antigen recognition. Alpha-beta T cell receptors are antigen specific receptors which are essential to the immune response and are present on the cell surface of T lymphocytes. Recognize peptide-major histocompatibility (MH) (pMH) complexes that are displayed by antigen presenting cells (APC), a prerequisite for efficient T cell adaptive immunity against pathogens. Binding of alpha-beta TR to pMH complex initiates TR-CD3 clustering on the cell surface and intracellular activation of LCK that phosphorylates the ITAM motifs of CD3G, CD3D, CD3E and CD247 enabling the recruitment of ZAP70. In turn ZAP70 phosphorylates LAT, which recruits numerous signaling molecules to form the LAT signalosome. The LAT signalosome propagates signal branching to three major signaling pathways, the calcium, the mitogen-activated protein kinase (MAPK) kinase and the nuclear factor NF-kappa-B (NF-kB) pathways, leading to the mobilization of transcription factors that are critical for gene expression and essential for T cell growth and differentiation. The T cell repertoire is generated in the thymus, by V-(D)-J rearrangement. This repertoire is then shaped by intrathymic selection events to generate a peripheral T cell pool of self-MH restricted, non-autoaggressive T cells. Post-thymic interaction of alpha-beta TR with the pMH complexes shapes TR structural and functional avidity. The sequence is that of T cell receptor beta variable 7-2 from Homo sapiens (Human).